The primary structure comprises 50 residues: AEGDDPAKAAFDSLQASATEYIGYAWAMVVVIVGATIGIKLFKKFASKAS.

Residues 1–21 (AEGDDPAKAAFDSLQASATEY) are Periplasmic-facing. The helical transmembrane segment at 22–42 (IGYAWAMVVVIVGATIGIKLF) threads the bilayer. The Cytoplasmic segment spans residues 43-50 (KKFASKAS).

The protein belongs to the inovirus capsid protein family. In terms of assembly, homomultimerizes. There are several thousands of this protein in the phage capsid.

It localises to the virion. Its subcellular location is the host membrane. Self assembles to form a helical capsid wrapping up the viral genomic DNA. The capsid displays a filamentous structure with a length of 760-1950 nm and a width of 6-8 nm. The virion assembly and budding take place at the host inner membrane. The sequence is that of Capsid protein G8P (VIII) from Escherichia coli (Bacteriophage ZJ-2).